The primary structure comprises 577 residues: Arginine--tRNA ligase (577 aa).

Positions 122–132 match the 'HIGH' region motif; the sequence is PNVAKEMHVGH.

The protein belongs to the class-I aminoacyl-tRNA synthetase family. In terms of assembly, monomer.

It is found in the cytoplasm. It carries out the reaction tRNA(Arg) + L-arginine + ATP = L-arginyl-tRNA(Arg) + AMP + diphosphate. This Salmonella typhimurium (strain SL1344) protein is Arginine--tRNA ligase (argS).